A 162-amino-acid chain; its full sequence is Balbiani ring protein 2 (162 aa).

Residues 1 to 31 (CDDAMRKTESDKCTNIGGKFDPSTCKCTPET) are last constant region. The tract at residues 32–51 (VTEGPTTCLESSESDEVTTK) is last Cys-1 repeat. The tract at residues 52 to 162 (KPCDCTCAPD…VKGLEDILNS (111 aa)) is unique region.

As to expression, salivary gland.

Its subcellular location is the secreted. Functionally, used by the larvae to construct a supramolecular structure, the larval tube. The sequence is that of Balbiani ring protein 2 (BR2) from Chironomus pallidivittatus (Midge).